The primary structure comprises 520 residues: Cytochrome P450 monooxygenase TRI4 (520 aa).

The chain crosses the membrane as a helical span at residues 10–30; the sequence is LVNIPISHAVGVVAASTVIYF. N-linked (GlcNAc...) asparagine glycosylation occurs at Asn447. Cys455 is a heme binding site.

The protein belongs to the cytochrome P450 family. It depends on heme as a cofactor.

The protein localises to the membrane. The protein operates within sesquiterpene biosynthesis; trichothecene biosynthesis. Cytochrome P450 monooxygenase; part of the core gene cluster that mediates the biosynthesis of trichothecenes, a very large family of chemically related bicyclic sesquiterpene compounds acting as mycotoxins, including T2-toxin. The biosynthesis of trichothecenes begins with the cyclization of farnesyl diphosphate to trichodiene and is catalyzed by the trichodiene synthase TRI5. Trichodiene undergoes a series of oxygenations catalyzed by the cytochrome P450 monooxygenase TRI4. TRI4 controls the addition of four oxygens at C-2, C-3, C-11, and the C-12, C-13-epoxide to form the intermediate isotrichotriol. Isotrichotriol then undergoes a non-enzymatic isomerization and cyclization to form isotrichodermol. During this process, the oxygen at the C-2 position becomes the pyran ring oxygen and the hydroxyl group at C-11 is lost. More complex type A trichothecenes are built by modifying isotrichodermol through a series of paired hydroxylation and acetylation or acylation steps. Isotrichodermol is converted to isotrichodermin by the acetyltransferase TRI101. TRI101 encodes a C-3 transacetylase that acts as a self-protection or resistance factor during biosynthesis and that the presence of a free C-3 hydroxyl group is a key component of Fusarium trichothecene phytotoxicity. A second hydroxyl group is added to C-15 by the trichothecene C-15 hydroxylase TRI11, producing 15-decalonectrin, which is then acetylated by TRI3, producing calonectrin. A third hydroxyl group is added at C-4 by the cytochrome P450 monooxygenase TRI13, converting calonectrin to 3,15-diacetoxyspirpenol, which is subsequently acetylated by the acetyltransferase TRI7. A fourth hydroxyl group is added to C-8 by the cytochrome P450 monooxygenase TRI1, followed by the addition of an isovaleryl moiety by TRI16. Finally, the acetyl group is removed from the C-3 position by the trichothecene C-3 esterase TRI8 to produce T-2 toxin. This Fusarium sporotrichioides protein is Cytochrome P450 monooxygenase TRI4.